The chain runs to 291 residues: Probable alpha-L-glutamate ligase (291 aa).

Residues 104 to 287 (HQLLASQGID…VAGTIIQHLE (184 aa)) form the ATP-grasp domain. Residues Lys-141, 178–179 (EF), Asp-187, and 211–213 (RSN) contribute to the ATP site. Mg(2+) contacts are provided by Asp-248, Glu-260, and Asn-262. Mn(2+) contacts are provided by Asp-248, Glu-260, and Asn-262.

Belongs to the RimK family. The cofactor is Mg(2+). Mn(2+) serves as cofactor.

The protein is Probable alpha-L-glutamate ligase of Xanthomonas campestris pv. campestris (strain 8004).